The chain runs to 649 residues: PTS system mannitol-specific EIICBA component (649 aa).

Positions 13-342 constitute a PTS EIIC type-2 domain; it reads FGRFLSNMVM…LLMKAQTSTE (330 aa). A run of 6 helical transmembrane segments spans residues 25–46, 51–71, 135–156, 166–186, 274–293, and 314–335; these read IGAF…WVPN, SLVG…TGGK, SAGI…PFVK, VNFL…EPAK, AIAG…AGLV, and LGVV…ALLM. Residues 384-475 enclose the PTS EIIB type-2 domain; the sequence is QSIIVACDAG…LVTQLLAAKR (92 aa). The active-site Phosphocysteine intermediate; for EIIB activity is the Cys390. At Cys390 the chain carries Phosphocysteine; by EIIA. One can recognise a PTS EIIA type-2 domain in the interval 504–646; that stretch reads FQLQKENIHL…SDVLSILATS (143 aa). The active-site Tele-phosphohistidine intermediate; for EIIA activity is His564. His564 carries the phosphohistidine; by HPr modification.

In terms of assembly, homodimer. In terms of processing, an intramolecular phosphotransfer takes places between His-564 and Cys-390.

The protein resides in the cell inner membrane. The catalysed reaction is D-mannitol(out) + N(pros)-phospho-L-histidyl-[protein] = D-mannitol 1-phosphate(in) + L-histidyl-[protein]. The phosphoenolpyruvate-dependent sugar phosphotransferase system (sugar PTS), a major carbohydrate active transport system, catalyzes the phosphorylation of incoming sugar substrates concomitantly with their translocation across the cell membrane. This system is involved in D-mannitol transport. The sequence is that of PTS system mannitol-specific EIICBA component (mtlA) from Vibrio cholerae serotype O1 (strain ATCC 39315 / El Tor Inaba N16961).